Consider the following 183-residue polypeptide: ATP-dependent protease subunit HslV (183 aa).

The active site involves threonine 2. The Na(+) site is built by glycine 157, cysteine 160, and threonine 163.

The protein belongs to the peptidase T1B family. HslV subfamily. A double ring-shaped homohexamer of HslV is capped on each side by a ring-shaped HslU homohexamer. The assembly of the HslU/HslV complex is dependent on binding of ATP.

It localises to the cytoplasm. The catalysed reaction is ATP-dependent cleavage of peptide bonds with broad specificity.. Its activity is regulated as follows. Allosterically activated by HslU binding. Its function is as follows. Protease subunit of a proteasome-like degradation complex believed to be a general protein degrading machinery. This chain is ATP-dependent protease subunit HslV, found in Vibrio parahaemolyticus serotype O3:K6 (strain RIMD 2210633).